Here is a 921-residue protein sequence, read N- to C-terminus: MEYKNTLLMPKTEFPMRGNLPKREPAMQEKWAEMNIYEKVQEHTKGRPLFVLHDGPPYANGDIHMGHALNKVLKDFIVRYKSMTGFCAPYVPGWDTHGLPIEQALTNKGVKRKEMTVAEFRKLCAEYAYEQVERQREQFKRLGVRADWDNPYITLEPAYEAQQIKVFGDMAKKGYIYKGQKPVYWSPTSESALAEAEIEYQDKKSASIYVAFPVKDGKNVLEGDEKYIIWTTTPWTLPANLGISVHPELEYAIVKVNDEKYIIASELFETVAKTLEWENAEVVKTVKGSELEYTVAKHPFYDRDSLVMLGDHVTTDAGTGCVHTAPGHGEDDFVVGKKYGLEVLCPVDDKGVLTEEAPGFEGLFYDKANKPITEKLEEVGALLKLTFITHSYPHDWRTKKPIIFRATAQWFASIEAFRKELLEAVAETKWVPAWGETRLHNMVRDRGDWCISRQRAWGVPIPVFYAENGDPIITDETINHVADLFREHGSNVWFEREAKDLLPEGFTHPGSPNGEFRKETDIMDVWFDSGSSHQAVLEERDDLQRPADLYLEGSDQYRGWFNSSLSTAVAVTGKAPYKGVLSHGFVLDGEGRKMSKSIGNIVVPKKIMDQLGGDILRLWVSSVDYQSDVRISDDILKQVAEVYRKIRNTFRFLLGNLDDFKPSENTVAVAELREVDRYMLVKLNDLITKVKEAYETYDFAAVYHAIHNFCTIDLSSFYLDFAKDILYIEGANHEDRRAIQTVLYDVLVALTKLVTPILPHTADEVWPYIPGVTEESVQLTDMPEAVQLDDAEALKTKWDAFMTLRDDVLKALEVARNEKVIGKSLNASITLYPTAEMKTMLESINEDLKQLFIVSEYKLGGMMEEAPADAPKYEHTAVVVAQATGETCERCWVVSETIGKDAEHETLCERCATVVKENYVK.

The short motif at 57–67 (PYANGDIHMGH) is the 'HIGH' region element. Glutamate 552 lines the L-isoleucyl-5'-AMP pocket. The 'KMSKS' region signature appears at 593–597 (KMSKS). Residue lysine 596 coordinates ATP. Zn(2+) is bound by residues cysteine 888, cysteine 891, cysteine 908, and cysteine 911.

Belongs to the class-I aminoacyl-tRNA synthetase family. IleS type 1 subfamily. In terms of assembly, monomer. Zn(2+) is required as a cofactor.

The protein localises to the cytoplasm. The enzyme catalyses tRNA(Ile) + L-isoleucine + ATP = L-isoleucyl-tRNA(Ile) + AMP + diphosphate. In terms of biological role, catalyzes the attachment of isoleucine to tRNA(Ile). As IleRS can inadvertently accommodate and process structurally similar amino acids such as valine, to avoid such errors it has two additional distinct tRNA(Ile)-dependent editing activities. One activity is designated as 'pretransfer' editing and involves the hydrolysis of activated Val-AMP. The other activity is designated 'posttransfer' editing and involves deacylation of mischarged Val-tRNA(Ile). This is Isoleucine--tRNA ligase from Bacillus cereus (strain 03BB102).